A 606-amino-acid polypeptide reads, in one-letter code: Threonine dehydratase 1 biosynthetic, chloroplastic (606 aa).

Lys154 is modified (N6-(pyridoxal phosphate)lysine). ACT-like domains are found at residues 432–504 and 526–597; these read AVLA…NLTD and LLCR…MESL.

The protein belongs to the serine/threonine dehydratase family. Pyridoxal 5'-phosphate is required as a cofactor. As to expression, expressed constitutively in all tissues examined including root, stem, petiole, leaf, immature flower bud, unopened flower and opened flower with the highest expression in opened flower and lowest in leaf.

It localises to the plastid. The protein localises to the chloroplast. The enzyme catalyses L-threonine = 2-oxobutanoate + NH4(+). It participates in amino-acid biosynthesis; L-isoleucine biosynthesis; 2-oxobutanoate from L-threonine: step 1/1. With respect to regulation, strongly inhibited by 1 mM isoleucine. Its function is as follows. Has a housekeeping role in isoleucine biosynthesis. The polypeptide is Threonine dehydratase 1 biosynthetic, chloroplastic (Solanum lycopersicum (Tomato)).